Reading from the N-terminus, the 210-residue chain is Holliday junction branch migration complex subunit RuvA (210 aa).

A domain I region spans residues 1 to 70 (MISYLKGNPI…DEQPILYGFA (70 aa)). The segment at 71 to 149 (TAAERELFRQ…QWRKLVGITL (79 aa)) is domain II. Residues 150 to 160 (PSTSAIPSLEV) are flexible linker. Positions 160 to 210 (VLEDVEMTLLALGYTNEEINKAISTLSQDNQMLKNTNSEEWIREAIAWLSQ) are domain III.

The protein belongs to the RuvA family. As to quaternary structure, homotetramer. Forms an RuvA(8)-RuvB(12)-Holliday junction (HJ) complex. HJ DNA is sandwiched between 2 RuvA tetramers; dsDNA enters through RuvA and exits via RuvB. An RuvB hexamer assembles on each DNA strand where it exits the tetramer. Each RuvB hexamer is contacted by two RuvA subunits (via domain III) on 2 adjacent RuvB subunits; this complex drives branch migration. In the full resolvosome a probable DNA-RuvA(4)-RuvB(12)-RuvC(2) complex forms which resolves the HJ.

It is found in the cytoplasm. In terms of biological role, the RuvA-RuvB-RuvC complex processes Holliday junction (HJ) DNA during genetic recombination and DNA repair, while the RuvA-RuvB complex plays an important role in the rescue of blocked DNA replication forks via replication fork reversal (RFR). RuvA specifically binds to HJ cruciform DNA, conferring on it an open structure. The RuvB hexamer acts as an ATP-dependent pump, pulling dsDNA into and through the RuvAB complex. HJ branch migration allows RuvC to scan DNA until it finds its consensus sequence, where it cleaves and resolves the cruciform DNA. This Rippkaea orientalis (strain PCC 8801 / RF-1) (Cyanothece sp. (strain PCC 8801)) protein is Holliday junction branch migration complex subunit RuvA.